A 349-amino-acid chain; its full sequence is UDP-3-O-acylglucosamine N-acyltransferase (349 aa).

Histidine 240 acts as the Proton acceptor in catalysis.

The protein belongs to the transferase hexapeptide repeat family. LpxD subfamily. As to quaternary structure, homotrimer.

It catalyses the reaction a UDP-3-O-[(3R)-3-hydroxyacyl]-alpha-D-glucosamine + a (3R)-hydroxyacyl-[ACP] = a UDP-2-N,3-O-bis[(3R)-3-hydroxyacyl]-alpha-D-glucosamine + holo-[ACP] + H(+). It participates in bacterial outer membrane biogenesis; LPS lipid A biosynthesis. In terms of biological role, catalyzes the N-acylation of UDP-3-O-acylglucosamine using 3-hydroxyacyl-ACP as the acyl donor. Is involved in the biosynthesis of lipid A, a phosphorylated glycolipid that anchors the lipopolysaccharide to the outer membrane of the cell. In Porphyromonas gingivalis (strain ATCC 33277 / DSM 20709 / CIP 103683 / JCM 12257 / NCTC 11834 / 2561), this protein is UDP-3-O-acylglucosamine N-acyltransferase.